The primary structure comprises 285 residues: ATP synthase gamma chain (285 aa).

It belongs to the ATPase gamma chain family. In terms of assembly, F-type ATPases have 2 components, CF(1) - the catalytic core - and CF(0) - the membrane proton channel. CF(1) has five subunits: alpha(3), beta(3), gamma(1), delta(1), epsilon(1). CF(0) has three main subunits: a, b and c.

The protein resides in the cell membrane. Its function is as follows. Produces ATP from ADP in the presence of a proton gradient across the membrane. The gamma chain is believed to be important in regulating ATPase activity and the flow of protons through the CF(0) complex. The sequence is that of ATP synthase gamma chain from Exiguobacterium sp. (strain ATCC BAA-1283 / AT1b).